The chain runs to 315 residues: L-lactate dehydrogenase (315 aa).

V14, D35, and Y66 together coordinate NAD(+). Residues Q83, R89, and 121–124 (NPVD) contribute to the substrate site. Residues 119–121 (VAN) and S144 contribute to the NAD(+) site. 149 to 152 (DTAR) serves as a coordination point for substrate. Catalysis depends on H176, which acts as the Proton acceptor. Residue Y221 is modified to Phosphotyrosine. T230 contacts substrate.

The protein belongs to the LDH/MDH superfamily. LDH family. In terms of assembly, homotetramer.

It localises to the cytoplasm. It catalyses the reaction (S)-lactate + NAD(+) = pyruvate + NADH + H(+). Its pathway is fermentation; pyruvate fermentation to lactate; (S)-lactate from pyruvate: step 1/1. Catalyzes the conversion of lactate to pyruvate. The sequence is that of L-lactate dehydrogenase from Mesomycoplasma hyopneumoniae (strain 232) (Mycoplasma hyopneumoniae).